A 331-amino-acid chain; its full sequence is MVKVAINGFGRIGRLVMRIALSRANVEVVAINDPFITVDYAAYMFKYDSTHGKYAGDVQYEGNTLVIDGKKIKVFQERDPAQLPWGEEGIDIAIDSTGVFKELDSAQKHIDAGAKKVVITAPSSTAPMFVMGVNEEKYAGETIVSNASCTTNCLAPLAKVIDEQFGIEEGLMTTVHSLTATQKTVDGPSMKDWRGGRTASGNIIPSSTGAAKAVGKVLPQLNGKLTGMAFRVPTVDVSVVDLTVKLNKETTYDEIKAAIKAASEGKLKGILGYTEDAVVSTDFLGDNNSSIFDASAGIMLSPKFVKLVSWYDNEYGYSTRVVDLVEHVAAN.

NAD(+)-binding positions include 11 to 12 (RI), Asp-33, and Arg-78. D-glyceraldehyde 3-phosphate contacts are provided by residues 148-150 (SCT), Thr-179, 208-209 (TG), and Arg-231. Catalysis depends on Cys-149, which acts as the Nucleophile. Asn-313 is a binding site for NAD(+).

This sequence belongs to the glyceraldehyde-3-phosphate dehydrogenase family. As to quaternary structure, homotetramer.

Its subcellular location is the cytoplasm. It carries out the reaction D-glyceraldehyde 3-phosphate + phosphate + NAD(+) = (2R)-3-phospho-glyceroyl phosphate + NADH + H(+). It functions in the pathway carbohydrate degradation; glycolysis; pyruvate from D-glyceraldehyde 3-phosphate: step 1/5. This is Glyceraldehyde-3-phosphate dehydrogenase (GPD) from Eremothecium gossypii (strain ATCC 10895 / CBS 109.51 / FGSC 9923 / NRRL Y-1056) (Yeast).